Here is a 179-residue protein sequence, read N- to C-terminus: ATP synthase subunit delta (179 aa).

The protein belongs to the ATPase delta chain family. In terms of assembly, F-type ATPases have 2 components, F(1) - the catalytic core - and F(0) - the membrane proton channel. F(1) has five subunits: alpha(3), beta(3), gamma(1), delta(1), epsilon(1). F(0) has three main subunits: a(1), b(2) and c(10-14). The alpha and beta chains form an alternating ring which encloses part of the gamma chain. F(1) is attached to F(0) by a central stalk formed by the gamma and epsilon chains, while a peripheral stalk is formed by the delta and b chains.

The protein localises to the cell membrane. In terms of biological role, f(1)F(0) ATP synthase produces ATP from ADP in the presence of a proton or sodium gradient. F-type ATPases consist of two structural domains, F(1) containing the extramembraneous catalytic core and F(0) containing the membrane proton channel, linked together by a central stalk and a peripheral stalk. During catalysis, ATP synthesis in the catalytic domain of F(1) is coupled via a rotary mechanism of the central stalk subunits to proton translocation. Its function is as follows. This protein is part of the stalk that links CF(0) to CF(1). It either transmits conformational changes from CF(0) to CF(1) or is implicated in proton conduction. This is ATP synthase subunit delta from Listeria innocua serovar 6a (strain ATCC BAA-680 / CLIP 11262).